A 514-amino-acid chain; its full sequence is 2,3-bisphosphoglycerate-independent phosphoglycerate mutase (514 aa).

2 residues coordinate Mn(2+): Asp-14 and Ser-64. The Phosphoserine intermediate role is filled by Ser-64. Substrate-binding positions include His-125, 155-156 (RD), Arg-187, Arg-193, 263-266 (RADR), and Lys-336. Mn(2+)-binding residues include Asp-403, His-407, Asp-444, His-445, and His-463.

It belongs to the BPG-independent phosphoglycerate mutase family. Monomer. Mn(2+) serves as cofactor.

It catalyses the reaction (2R)-2-phosphoglycerate = (2R)-3-phosphoglycerate. Its pathway is carbohydrate degradation; glycolysis; pyruvate from D-glyceraldehyde 3-phosphate: step 3/5. Catalyzes the interconversion of 2-phosphoglycerate and 3-phosphoglycerate. The polypeptide is 2,3-bisphosphoglycerate-independent phosphoglycerate mutase (Shewanella denitrificans (strain OS217 / ATCC BAA-1090 / DSM 15013)).